The sequence spans 256 residues: Spheroidene monooxygenase (256 aa).

The span at 1–23 shows a compositional bias: low complexity; that stretch reads MTNELSNAAGASQQGPAASSFSA. A disordered region spans residues 1–26; it reads MTNELSNAAGASQQGPAASSFSADTP.

Belongs to the CrtA family. The cofactor is heme.

It carries out the reaction spheroidene + 4 reduced [2Fe-2S]-[ferredoxin] + 2 O2 + 4 H(+) = spheroiden-2-one + 4 oxidized [2Fe-2S]-[ferredoxin] + 3 H2O. The enzyme catalyses spirilloxanthin + 4 reduced [2Fe-2S]-[ferredoxin] + 2 O2 + 4 H(+) = 2-oxospirilloxanthin + 4 oxidized [2Fe-2S]-[ferredoxin] + 3 H2O. The catalysed reaction is 2-oxospirilloxanthin + 4 reduced [2Fe-2S]-[ferredoxin] + 2 O2 + 4 H(+) = 2,2'-dioxospirilloxanthin + 4 oxidized [2Fe-2S]-[ferredoxin] + 3 H2O. It catalyses the reaction spheroidene + 2 reduced [2Fe-2S]-[ferredoxin] + O2 + 2 H(+) = 2-hydroxyspheroidene + 2 oxidized [2Fe-2S]-[ferredoxin] + H2O. It carries out the reaction 2-hydroxyspheroidene + 2 reduced [2Fe-2S]-[ferredoxin] + O2 + 2 H(+) = 2,2-dihydroxyspheroidene + 2 oxidized [2Fe-2S]-[ferredoxin] + H2O. The enzyme catalyses 2,2-dihydroxyspheroidene = spheroiden-2-one + H2O. The catalysed reaction is spirilloxanthin + 2 reduced [2Fe-2S]-[ferredoxin] + O2 + 2 H(+) = 2-hydroxyspirilloxanthin + 2 oxidized [2Fe-2S]-[ferredoxin] + H2O. It catalyses the reaction 2-hydroxyspirilloxanthin + 2 reduced [2Fe-2S]-[ferredoxin] + O2 + 2 H(+) = 2,2-dihydroxyspirilloxanthin + 2 oxidized [2Fe-2S]-[ferredoxin] + H2O. It carries out the reaction 2,2-dihydroxyspirilloxanthin = 2-oxospirilloxanthin + H2O. The enzyme catalyses 2-oxospirilloxanthin + 2 reduced [2Fe-2S]-[ferredoxin] + O2 + 2 H(+) = 2'-hydroxy-2-oxospirilloxanthin + 2 oxidized [2Fe-2S]-[ferredoxin] + H2O. The catalysed reaction is 2'-hydroxy-2-oxospirilloxanthin + 2 reduced [2Fe-2S]-[ferredoxin] + O2 + 2 H(+) = 2',2'-dihydroxy-2-oxospirilloxanthin + 2 oxidized [2Fe-2S]-[ferredoxin] + H2O. It catalyses the reaction 2',2'-dihydroxy-2-oxospirilloxanthin = 2,2'-dioxospirilloxanthin + H2O. Its pathway is carotenoid biosynthesis; spheroidene biosynthesis. The protein operates within carotenoid biosynthesis; spirilloxanthin biosynthesis. Involved in the biosynthesis of the carotenoids spheroidene and spirilloxanthin. Catalyzes the introduction of one keto group at the C-2 position of spheroidene and two keto groups at the C-2 and C-2' positions of spirilloxanthin. The polypeptide is Spheroidene monooxygenase (Rubrivivax gelatinosus (Rhodocyclus gelatinosus)).